We begin with the raw amino-acid sequence, 348 residues long: D-alanine--D-alanine ligase (348 aa).

Positions 132-334 (KRVLESAGIP…YAELIEELVR (203 aa)) constitute an ATP-grasp domain. 162–217 (EAVLSYPVFVKPANMGSSVGISKAESEEELRAAILLALTYDSRILIEQGVLAREIE) is a binding site for ATP. Positions 288, 301, and 303 each coordinate Mg(2+).

The protein belongs to the D-alanine--D-alanine ligase family. It depends on Mg(2+) as a cofactor. Mn(2+) serves as cofactor.

It localises to the cytoplasm. The enzyme catalyses 2 D-alanine + ATP = D-alanyl-D-alanine + ADP + phosphate + H(+). It participates in cell wall biogenesis; peptidoglycan biosynthesis. Its function is as follows. Cell wall formation. In Streptococcus equi subsp. equi (strain 4047), this protein is D-alanine--D-alanine ligase.